The chain runs to 244 residues: Small ribosomal subunit protein uS2 (244 aa).

The protein belongs to the universal ribosomal protein uS2 family.

The chain is Small ribosomal subunit protein uS2 from Exiguobacterium sibiricum (strain DSM 17290 / CCUG 55495 / CIP 109462 / JCM 13490 / 255-15).